We begin with the raw amino-acid sequence, 134 residues long: Interleukin-5 (134 aa).

Residues 1–21 form the signal peptide; it reads MRMHLHLTLVALGAAYVCANA. Residues asparagine 76 and asparagine 90 are each glycosylated (N-linked (GlcNAc...) asparagine).

The protein belongs to the IL-5 family. As to quaternary structure, homodimer; disulfide-linked. Interacts with IL5RA. Interacts with CSF2RB.

Its subcellular location is the secreted. Functionally, homodimeric cytokine expressed predominantly by T-lymphocytes and NK cells that plays an important role in the survival, differentiation, and chemotaxis of eosinophils. Also acts on activated and resting B-cells to induce immunoglobulin production, growth, and differentiation. Mechanistically, exerts its biological effects through a receptor composed of IL5RA subunit and the cytokine receptor common subunit beta/CSF2RB. Binding to the receptor leads to activation of various kinases including LYN, SYK and JAK2 and thereby propagates signals through the RAS-MAPK and JAK-STAT5 pathways respectively. The chain is Interleukin-5 (IL5) from Bos taurus (Bovine).